Here is a 490-residue protein sequence, read N- to C-terminus: Myocilin (490 aa).

The signal sequence occupies residues 1 to 18 (MPATQLLLLACLVWGLGA). An N-linked (GlcNAc...) asparagine glycan is attached at Asn43. Residues 52-169 (QAMSAIQDLQ…SQEVARLRRG (118 aa)) are a coiled coil. Residues 146-157 (REENEDLARRLD) are compositionally biased toward basic and acidic residues. The tract at residues 146–188 (REENEDLARRLDSSSQEVARLRRGQCPQARGTPQDVPSGSREV) is disordered. Positions 230–489 (GCGELVWVGE…MVTYDLRLSE (260 aa)) constitute an Olfactomedin-like domain. Cysteines 231 and 419 form a disulfide. Asp366, Asn414, Ala415, Val463, and Asp464 together coordinate Ca(2+). The Microbody targeting signal signature appears at 488–490 (SEM).

Homodimer (via N-terminus). Can also form higher oligomers. Interacts with OLFM3, FN1, NRCAM, GLDN and NFASC. Interacts (via N-terminus) with MYL2. Interacts with SFRP1, FRZB, FZD7, FZD10, FZD1 and WIF1; regulates Wnt signaling. Interacts with SNTA1; regulates muscle hypertrophy. Interacts with ERBB2 and ERBB3; activates ERBB2-ERBB3 signaling pathway. Interacts with SNCG; affects its secretion and its aggregation. Palmitoylated. In terms of processing, undergoes a calcium-dependent proteolytic cleavage at Arg-212 by CAPN2 in the endoplasmic reticulum. The result is the production of two fragments, one of 35 kDa containing the C-terminal olfactomedin-like domain, and another of 20 kDa containing the N-terminal leucine zipper-like domain. Post-translationally, glycosylated. Expressed in optic nerve head, ciliary body and retina.

The protein localises to the secreted. Its subcellular location is the golgi apparatus. It localises to the cytoplasmic vesicle. It is found in the extracellular space. The protein resides in the extracellular matrix. The protein localises to the extracellular exosome. Its subcellular location is the mitochondrion. It localises to the mitochondrion intermembrane space. It is found in the mitochondrion inner membrane. The protein resides in the mitochondrion outer membrane. The protein localises to the rough endoplasmic reticulum. Its subcellular location is the cell projection. It localises to the cilium. It is found in the endoplasmic reticulum. Its function is as follows. Secreted glycoprotein regulating the activation of different signaling pathways in adjacent cells to control different processes including cell adhesion, cell-matrix adhesion, cytoskeleton organization and cell migration. Promotes substrate adhesion, spreading and formation of focal contacts. Negatively regulates cell-matrix adhesion and stress fiber assembly through Rho protein signal transduction. Modulates the organization of actin cytoskeleton by stimulating the formation of stress fibers through interactions with components of Wnt signaling pathways. Promotes cell migration through activation of PTK2 and the downstream phosphatidylinositol 3-kinase signaling. Plays a role in bone formation and promotes osteoblast differentiation in a dose-dependent manner through mitogen-activated protein kinase signaling. Mediates myelination in the peripheral nervous system through ERBB2/ERBB3 signaling. Plays a role as a regulator of muscle hypertrophy through the components of dystrophin-associated protein complex. Involved in positive regulation of mitochondrial depolarization. Plays a role in neurite outgrowth. May participate in the obstruction of fluid outflow in the trabecular meshwork. The polypeptide is Myocilin (MYOC) (Felis catus (Cat)).